A 1020-amino-acid chain; its full sequence is Protein translocase subunit SecA (1020 aa).

Residues Q143, 161–165, and D661 contribute to the ATP site; that span reads GEGKT. Residues 974–1020 form a disordered region; the sequence is SVYNASPGAENEAPLQRPVTADSKPGRNDPCPCGSGKKYKNCHGQQP. Positions 1004, 1006, 1015, and 1016 each coordinate Zn(2+).

This sequence belongs to the SecA family. As to quaternary structure, monomer and homodimer. Part of the essential Sec protein translocation apparatus which comprises SecA, SecYEG and auxiliary proteins SecDF. Other proteins may also be involved. The cofactor is Zn(2+).

The protein localises to the cell inner membrane. It is found in the cytoplasm. The catalysed reaction is ATP + H2O + cellular proteinSide 1 = ADP + phosphate + cellular proteinSide 2.. In terms of biological role, part of the Sec protein translocase complex. Interacts with the SecYEG preprotein conducting channel. Has a central role in coupling the hydrolysis of ATP to the transfer of proteins into and across the cell membrane, serving as an ATP-driven molecular motor driving the stepwise translocation of polypeptide chains across the membrane. The chain is Protein translocase subunit SecA from Chlorobium phaeovibrioides (strain DSM 265 / 1930) (Prosthecochloris vibrioformis (strain DSM 265)).